Here is a 213-residue protein sequence, read N- to C-terminus: MNLFRFTADVAHAIAIVVLLLKIWKSRSCEGISGRSQLLFALVFVTRYLDLFTNFFSFYNTAMKIFYLVASFGTVYLMWAKFKATYDRNNDSFRIEFLVIPSMILALLINHEFIFMEVMWTFSIYLEAVAIMPQLFMLSRTGNAETITAHYLFALGSYRFLYILNWVYRYYTESFFDPISVVAGIVQTVLYADFFYLYITRVIQSNRQFEMSA.

Residues 1–2 (MN) are Lumenal-facing. Residues 3 to 21 (LFRFTADVAHAIAIVVLLL) traverse the membrane as a helical segment. The Cytoplasmic segment spans residues 22 to 35 (KIWKSRSCEGISGR). A helical membrane pass occupies residues 36–53 (SQLLFALVFVTRYLDLFT). Residues 54–61 (NFFSFYNT) lie on the Lumenal side of the membrane. Residues 62 to 80 (AMKIFYLVASFGTVYLMWA) form a helical membrane-spanning segment. Topologically, residues 81–96 (KFKATYDRNNDSFRIE) are cytoplasmic. Residues 97 to 110 (FLVIPSMILALLIN) traverse the membrane as a helical segment. Residues 111 to 117 (HEFIFME) lie on the Lumenal side of the membrane. A helical membrane pass occupies residues 118–137 (VMWTFSIYLEAVAIMPQLFM). Over 138 to 149 (LSRTGNAETITA) the chain is Cytoplasmic. The helical transmembrane segment at 150 to 168 (HYLFALGSYRFLYILNWVY) threads the bilayer. Topologically, residues 169 to 178 (RYYTESFFDP) are lumenal. The chain crosses the membrane as a helical span at residues 179–199 (ISVVAGIVQTVLYADFFYLYI). Residues 200-213 (TRVIQSNRQFEMSA) lie on the Cytoplasmic side of the membrane.

Belongs to the ERD2 family.

It localises to the endoplasmic reticulum membrane. Its function is as follows. Required for the retention of luminal endoplasmic reticulum proteins. Determines the specificity of the luminal ER protein retention system. Also required for normal vesicular traffic through the Golgi. This chain is ER lumen protein-retaining receptor erd-2.1, found in Caenorhabditis elegans.